Consider the following 998-residue polypeptide: UPF0182 protein AAur_2732 (998 aa).

7 consecutive transmembrane segments (helical) span residues 18–38 (GALT…IFFA), 64–84 (IITF…AIRI), 115–135 (VVMI…AASQ), 168–188 (FLGF…IAGI), 211–231 (QIHI…NFWL), 260–280 (AILA…AIIG), and 287–307 (IGTA…PWVI). 3 disordered regions span residues 490–518 (GAPD…TFSG), 888–923 (LFGG…PTDA), and 971–998 (QARL…SPSS). Residues 496–509 (PNREQDRPAGREGG) are compositionally biased toward basic and acidic residues. A compositionally biased stretch (pro residues) spans 908 to 919 (TSPPGTTPPPAG). Over residues 976–990 (ATPAPTATPGATPSA) the composition is skewed to low complexity.

This sequence belongs to the UPF0182 family.

It is found in the cell membrane. The sequence is that of UPF0182 protein AAur_2732 from Paenarthrobacter aurescens (strain TC1).